The chain runs to 124 residues: Ribonuclease pancreatic (124 aa).

Positions 1–13 (KESAAAKFERQHM) are enriched in basic and acidic residues. Residues 1–24 (KESAAAKFERQHMDSSTSSASSSN) are disordered. The substrate site is built by Lys-7 and Arg-10. The active-site Proton acceptor is His-12. Cystine bridges form between Cys-26–Cys-84, Cys-40–Cys-95, Cys-58–Cys-110, and Cys-65–Cys-72. N-linked (GlcNAc...) asparagine; partial glycosylation is present at Asn-34. Substrate is bound by residues 41 to 45 (KPVNT), Lys-66, and Arg-85. His-119 (proton donor) is an active-site residue.

This sequence belongs to the pancreatic ribonuclease family. In terms of assembly, monomer. Interacts with and forms tight 1:1 complexes with RNH1. Dimerization of two such complexes may occur. Interaction with RNH1 inhibits this protein. Pancreas.

Its subcellular location is the secreted. It carries out the reaction an [RNA] containing cytidine + H2O = an [RNA]-3'-cytidine-3'-phosphate + a 5'-hydroxy-ribonucleotide-3'-[RNA].. The catalysed reaction is an [RNA] containing uridine + H2O = an [RNA]-3'-uridine-3'-phosphate + a 5'-hydroxy-ribonucleotide-3'-[RNA].. In terms of biological role, endonuclease that catalyzes the cleavage of RNA on the 3' side of pyrimidine nucleotides. Acts on single-stranded and double-stranded RNA. This is Ribonuclease pancreatic (RNASE1) from Aepyceros melampus (Impala).